Here is a 369-residue protein sequence, read N- to C-terminus: Somatostatin receptor type 2 (369 aa).

Over M1–N43 the chain is Extracellular. N-linked (GlcNAc...) asparagine glycans are attached at residues N9, N22, N29, and N32. A helical transmembrane segment spans residues A44–V67. The Cytoplasmic portion of the chain corresponds to I68 to T78. A helical transmembrane segment spans residues N79–V103. At A104–V118 the chain is on the extracellular side. C115 and C193 are disulfide-bonded. The chain crosses the membrane as a helical span at residues M119 to I138. The Cytoplasmic segment spans residues D139–M161. The chain crosses the membrane as a helical span at residues I162–A181. Topologically, residues G182–G207 are extracellular. Residues F208–L229 traverse the membrane as a helical segment. Residues F230–K253 lie on the Cytoplasmic side of the membrane. A helical transmembrane segment spans residues V254 to S278. At S279–P288 the chain is on the extracellular side. The chain crosses the membrane as a helical span at residues A289–A303. Residues N304–I369 are Cytoplasmic-facing. Residue C328 is the site of S-palmitoyl cysteine attachment. Phosphoserine occurs at positions 341, 343, and 348. Residues T353 and T354 each carry the phosphothreonine modification.

This sequence belongs to the G-protein coupled receptor 1 family. As to quaternary structure, homodimer and heterodimer with SSTR3 and SSTR5. Heterodimerization with SSTR3 inactivates SSTR3 receptor function. Heterodimerization with SSTR5 is enhanced by agonist stimulation of SSTR2 and increases SSTR2 cell growth inhibition activity. Following agonist stimulation, homodimers dissociate into monomers which is required for receptor internalization. Interacts with beta-arrestin; this interaction is necessary for receptor internalization and is destabilized by heterodimerization with SSTR5 which results in increased recycling of SSTR2 to the cell surface. Interacts (via C-terminus) with SHANK1 (via PDZ domain). Phosphorylated on serine and threonine residues in response to agonist stimulation, leading to receptor desensitization and rapid internalization. Phosphorylated to a greater extent on serine than threonine residues. Threonine phosphorylation is required for arrestin binding and receptor endocytosis but is not necessary for desensitization. Cerebrum and kidney.

It is found in the cell membrane. It localises to the cytoplasm. Functionally, receptor for somatostatin-14 and -28. This receptor is coupled via pertussis toxin sensitive G proteins to inhibition of adenylyl cyclase. In addition it stimulates phosphotyrosine phosphatase and PLC via pertussis toxin insensitive as well as sensitive G proteins. Inhibits calcium entry by suppressing voltage-dependent calcium channels. Acts as the functionally dominant somatostatin receptor in pancreatic alpha- and beta-cells where it mediates the inhibitory effect of somatostatin-14 on hormone secretion. Inhibits cell growth through enhancement of MAPK1 and MAPK2 phosphorylation and subsequent up-regulation of CDKN1B. Stimulates neuronal migration and axon outgrowth and may participate in neuron development and maturation during brain development. Mediates negative regulation of insulin receptor signaling through PTPN6. Inactivates SSTR3 receptor function following heterodimerization. This Mus musculus (Mouse) protein is Somatostatin receptor type 2 (Sstr2).